Consider the following 130-residue polypeptide: MFNCLTKLVILVCLKYVAKALLNRSTGLIMKDKPEGVHHIKSCSDSSSRIWYSLWMNIAFCGGLGPTSIFDPCFLTSSAPSPPSAPALAIPAAAPPLPTSVPAGAGVEAGAGAETVSSSLMIFSSFFLYN.

Positions 1–20 are cleaved as a signal peptide; it reads MFNCLTKLVILVCLKYVAKA.

This is an uncharacterized protein from Saccharomyces cerevisiae (strain ATCC 204508 / S288c) (Baker's yeast).